The following is a 182-amino-acid chain: CDP-diacylglycerol--glycerol-3-phosphate 3-phosphatidyltransferase (182 aa).

At 2-12 (QFNIPTLLTLF) the chain is on the cytoplasmic side. Residues 13–37 (RVILIPFFVLVFYLPVTWSPFAAAL) traverse the membrane as a helical segment. Residues 38–60 (IFCVAAVTDWFDGFLARRWNQST) are Periplasmic-facing. Residues 61-81 (RFGAFLDPVADKVLVAIAMVL) traverse the membrane as a helical segment. Over 82-86 (VTEHY) the chain is Cytoplasmic. Residues 87-107 (HSWWVTLPAATMIAREIIISA) form a helical membrane-spanning segment. Residues 108 to 145 (LREWMAELGKRSSVAVSWIGKVKTTAQMVALAWLLWRP) lie on the Periplasmic side of the membrane. A helical transmembrane segment spans residues 146–168 (NIWVEYAGIALFFVAAVLTLWSM). Residues 169–181 (LQYLSAARADLLD) are Cytoplasmic-facing.

This sequence belongs to the CDP-alcohol phosphatidyltransferase class-I family.

Its subcellular location is the cell inner membrane. The catalysed reaction is a CDP-1,2-diacyl-sn-glycerol + sn-glycerol 3-phosphate = a 1,2-diacyl-sn-glycero-3-phospho-(1'-sn-glycero-3'-phosphate) + CMP + H(+). The protein operates within phospholipid metabolism; phosphatidylglycerol biosynthesis; phosphatidylglycerol from CDP-diacylglycerol: step 1/2. Its function is as follows. Catalyzes the conversion of cytidine diphosphate diacylglycerol (CDP-DG) and glycerol 3-phosphate into phosphatidylglycerol. Essential for the synthesis of anionic phospholipids, thereby playing a role in balancing the ratio of zwitterionic and anionic phospholipids, which is thought to be important for normal membrane function. The protein is CDP-diacylglycerol--glycerol-3-phosphate 3-phosphatidyltransferase of Shigella sonnei (strain Ss046).